The chain runs to 89 residues: Small ribosomal subunit protein uS15 (89 aa).

Belongs to the universal ribosomal protein uS15 family. Part of the 30S ribosomal subunit. Forms a bridge to the 50S subunit in the 70S ribosome, contacting the 23S rRNA.

One of the primary rRNA binding proteins, it binds directly to 16S rRNA where it helps nucleate assembly of the platform of the 30S subunit by binding and bridging several RNA helices of the 16S rRNA. In terms of biological role, forms an intersubunit bridge (bridge B4) with the 23S rRNA of the 50S subunit in the ribosome. This chain is Small ribosomal subunit protein uS15, found in Pseudomonas putida (Arthrobacter siderocapsulatus).